Here is a 239-residue protein sequence, read N- to C-terminus: Fatty acid metabolism regulator protein (239 aa).

An HTH gntR-type domain is found at 6–74; it reads QSPAGFAEEY…HGKPTQVNNF (69 aa). A DNA-binding region (H-T-H motif) is located at residues 34–53; that stretch reads ERELSELIGVTRTTLREVLQ.

As to quaternary structure, homodimer.

It is found in the cytoplasm. In terms of biological role, multifunctional regulator of fatty acid metabolism. The sequence is that of Fatty acid metabolism regulator protein from Edwardsiella ictaluri (strain 93-146).